The primary structure comprises 89 residues: Mu-theraphotoxin-Phlo1a (89 aa).

The N-terminal stretch at 1–22 is a signal peptide; it reads MKVSVLITLAVLGVMFVWTSAA. A propeptide spanning residues 23–52 is cleaved from the precursor; sequence EQEDHGSDRRDSPALLKNLLGEEVFQSEER. Disulfide bonds link Cys54–Cys68, Cys61–Cys73, and Cys67–Cys81. An Isoleucine amide modification is found at Ile87.

It belongs to the neurotoxin 10 (Hwtx-1) family. 39 (Jztx-34) subfamily. In terms of tissue distribution, expressed by the venom gland.

It is found in the secreted. Its function is as follows. Gating-modifier toxin that inhibits voltage-gated sodium channel Nav by shifting the threshold for channel activation to more positive potentials. This toxin moderately inhibits human Nav1.7/SCN9A (IC(50)=459 nM) and weakly inhibits hNav1.2/SCN2A and hNav1.5/SCN5A (&lt;20% inhibition at 1 uM peptide). Inhibition of Nav1.7 is voltage-dependent, with lower inhibition at more positive test pulses. The chain is Mu-theraphotoxin-Phlo1a from Phlogius sp. (Tarantula spider).